A 415-amino-acid polypeptide reads, in one-letter code: Phosphoribosylamine--glycine ligase (415 aa).

Positions 108 to 311 constitute an ATP-grasp domain; the sequence is KKIMEKYNIP…LMQHIIDLDE (204 aa). 134-191 serves as a coordination point for ATP; that stretch reads IENCELPVVVKKDGLAAGKGVIIADTIEAARSAIEIMYGDEEEGTVVFETFLEGEEFS. The Mg(2+) site is built by E281 and N283.

Belongs to the GARS family. It depends on Mg(2+) as a cofactor. Mn(2+) is required as a cofactor.

It catalyses the reaction 5-phospho-beta-D-ribosylamine + glycine + ATP = N(1)-(5-phospho-beta-D-ribosyl)glycinamide + ADP + phosphate + H(+). It participates in purine metabolism; IMP biosynthesis via de novo pathway; N(1)-(5-phospho-D-ribosyl)glycinamide from 5-phospho-alpha-D-ribose 1-diphosphate: step 2/2. This Staphylococcus aureus (strain MW2) protein is Phosphoribosylamine--glycine ligase.